The chain runs to 1142 residues: MSKFCLCLSLLGVLLLQVCDTRSLLELKIECPHTVGLGQGLVIGTVDLNPVPVESVSTLKLESSCNFDVHTSSATQQAVTKWTWEKKADTAETAKAASTTFQSKSTELNLRGLCVIPTLVLETANKLRKTVTCYDLSCNQTACIPTVYLIAPIHTCVTTKSCLLGLGTQRIQVTYEKTYCVSGQLVEGTCFNPIHTMALSQPSHTYDIVTIPVRCFFIAKKTNDDTLKIEKQFETILEKSGCTAANIKGYYVCFLGATSEPIFVPTMDDFRASQILSDMAISPHGEDHDSALSSVSTFRIAGKLSGKAPSTESSDTVQGVAFSGHPLYTSLSVLASKEDPVYIWSPGIIPERNHTVCDKKTLPLTWTGYLPLPGGIEKTTQCTIFCTLAGPGADCEAYSDTGIFNISSPTCLINRVQRFRGAEQQIKFVCQRVDLDIVVYCNGMKKVILTKTLVIGQCIYTFTSVFSLMPGIAHSLAVELCVPGIHGWSTIALLATFCFGWLLIPIISLVSIKIMLLFAYMCSKYSNDSKFRLLIEKVKQEYQKTMGSMVCEVCQQECEMAKELESHKKSCPNGMCPYCMNPTESTESALQAHFKVCKLTTRFQENLRKSLNPYEPKRGCYRTLSVFRYRSRCFVGLVWCILLVLELVIWAASADTVEIKTGWTDTAHGAGVIPLKSDLELDFSLPSSATYIYRRDLQNPANEQERIPFHFQLQRQVIHAEIQNLGHWMDGTFNLKTSFHCYGACEKYAYPWQTAKCFLEKDYEFETGWGCNPGDCPGVGTGCTACGVYLDKLRSVGKVFKVISLKFTRRVCIQLGSEQSCKTIDSNDCLMTTSVKVCMIGTVSKFQPGDTLLFLGPLEEGGIIFKQWCTTTCHFGDPGDIMSTPQGMQCPEHTGAFRKKCAFATMPTCEYDGNTLSGYQRMLATRDSFQSFNITEPHITSNSLEWVDPDSSLKDHINLVVNRDVSFQDLSENPCQVGVAVSSIDGAWGSGVGFNLVCSVSLTECASFLTSIKACDAAMCYGATTANLVRGQNTVHILGKGGHSGSKFMCCHSTECSSTGLTAAAPHLDRVTGYNVIDNDKVFDDGSPECGVHCWFKKSGEWLMGILSGNWMVVAVLVVLLILSIFLFSLCCPRRVVHKKSS.

Positions 1–21 (MSKFCLCLSLLGVLLLQVCDT) are cleaved as a signal peptide. Residues 22-489 (RSLLELKIEC…LCVPGIHGWS (468 aa)) lie on the Lumenal side of the membrane. Disulfide bonds link Cys-31–Cys-156, Cys-65–Cys-162, Cys-114–Cys-133, Cys-138–Cys-143, Cys-180–Cys-190, and Cys-215–Cys-253. Residue Asn-139 is glycosylated (N-linked (GlcNAc...) asparagine; by host). The N-linked (GlcNAc...) asparagine; by host glycan is linked to Asn-353. Intrachain disulfides connect Cys-382–Cys-441, Cys-386–Cys-395, Cys-411–Cys-430, and Cys-458–Cys-481. N-linked (GlcNAc...) asparagine; by host glycosylation occurs at Asn-405. Residues 490–510 (TIALLATFCFGWLLIPIISLV) traverse the membrane as a helical segment. Topologically, residues 511–633 (SIKIMLLFAY…LSVFRYRSRC (123 aa)) are cytoplasmic. Residues 522 to 539 (CSKYSNDSKFRLLIEKVK) are binding to the ribonucleoprotein. CCHC-type zinc fingers lie at residues 551–571 (CEVC…KKSC) and 576–597 (CPYC…FKVC). Binding to the ribonucleoprotein regions lie at residues 594 to 611 (FKVC…RKSL), 598 to 609 (KLTTRFQENLRK), and 617 to 631 (KRGC…RYRS). In terms of domain architecture, ITAM spans 617-640 (KRGCYRTLSVFRYRSRCFVGLVWC). Positions 621 to 624 (YRTL) match the YxxL motif. A helical membrane pass occupies residues 634 to 654 (FVGLVWCILLVLELVIWAASA). Residues 655–1110 (DTVEIKTGWT…EWLMGILSGN (456 aa)) lie on the Lumenal side of the membrane. Intrachain disulfides connect Cys-741–Cys-776, Cys-745–Cys-783, Cys-757–Cys-890, Cys-771–Cys-901, Cys-786–Cys-909, Cys-812–Cys-821, Cys-829–Cys-838, and Cys-869–Cys-873. Positions 763 to 783 (YEFETGWGCNPGDCPGVGTGC) are fusion loop. Asn-933 carries N-linked (GlcNAc...) asparagine; by host glycosylation. Disulfide bonds link Cys-975/Cys-1005, Cys-998/Cys-1050, Cys-1015/Cys-1020, Cys-1051/Cys-1056, and Cys-1090/Cys-1094. Residues 1111-1131 (WMVVAVLVVLLILSIFLFSLC) traverse the membrane as a helical segment. The interval 1127 to 1142 (LFSLCCPRRVVHKKSS) is binding to the ribonucleoprotein. Residues 1132-1142 (CPRRVVHKKSS) lie on the Cytoplasmic side of the membrane.

This sequence belongs to the hantavirus envelope glycoprotein family. In terms of assembly, homodimer. Homotetramer; forms heterotetrameric Gn-Gc spikes in the pre-fusion conformation. Interacts (via C-terminus) with the nucleoprotein. Interacts with host TUFM; this interaction contributes to the virus-induced degradation of mitochondria by autophagy, which leads to degradation of host MAVS and inhibition of type I interferon (IFN) responses. Interacts with host MAP1LC3B; this interaction contributes to the virus-induced degradation of mitochondria by autophagy, which leads to degradation of host MAVS and inhibition of type I interferon (IFN) responses. As to quaternary structure, homodimer. Homotetramer; forms heterotetrameric Gn-Gc spikes in the pre-fusion conformation. Homotrimer; forms homotrimer in the post-fusion conformation at acidic pH. Interacts (via C-terminus) with the nucleoprotein. Post-translationally, envelope polyprotein precursor is quickly cleaved in vivo just after synthesis, presumably by host signal peptidase.

The protein localises to the virion membrane. Its subcellular location is the host cell surface. The protein resides in the host Golgi apparatus membrane. It localises to the host endoplasmic reticulum membrane. It is found in the host mitochondrion. In terms of biological role, forms homotetramers with glycoprotein C at the surface of the virion. Attaches the virion to host cell receptors including integrin alpha5/ITGB1. This attachment induces virion internalization predominantly through clathrin-dependent endocytosis. Mediates the assembly and budding of infectious virus particles through its interaction with the nucleocapsid protein and the viral genome. May dysregulate normal immune and endothelial cell responses through an ITAM motif. Translocates to mitochondria, binds to host TUFM and recruits MAP1LC3B. These interactions induce mitochondrial autophagy and therefore destruction of host MAVS leading to inhibition of type I interferon (IFN) responses. Concomitant breakdown of glycoprotein N is apparently prevented by the nucleoprotein that may inhibit Gn-stimulated autophagosome-lysosome fusion. Interacts with the viral genomic RNA. Forms homotetramers with glycoprotein N at the surface of the virion. Attaches the virion to host cell receptors including integrin ITGAV/ITGB3. This attachment induces virion internalization predominantly through clathrin-dependent endocytosis. Class II fusion protein that promotes fusion of viral membrane with host endosomal membrane after endocytosis of the virion. This chain is Envelopment polyprotein (GP), found in Microtus pennsylvanicus (Meadow vole).